Reading from the N-terminus, the 433-residue chain is Glycerol-3-phosphate dehydrogenase [NAD(+)] (433 aa).

NAD(+) contacts are provided by residues 17–22 (GSGNWG), phenylalanine 49, and phenylalanine 117. Lysine 140 is a substrate binding site. Residue alanine 173 participates in NAD(+) binding. A disordered region spans residues 187-246 (IAYDPPPIDSSRAATPRDRSPNYDSTSANKLPDLTVTSADSNGKDDRGRRTKAKLTPVPE). Residues 208–227 (NYDSTSANKLPDLTVTSADS) are compositionally biased toward polar residues. Residue lysine 283 is the Proton acceptor of the active site. NAD(+) is bound by residues arginine 349 and glutamine 378. 349–350 (RN) serves as a coordination point for substrate.

Belongs to the NAD-dependent glycerol-3-phosphate dehydrogenase family.

The catalysed reaction is sn-glycerol 3-phosphate + NAD(+) = dihydroxyacetone phosphate + NADH + H(+). This chain is Glycerol-3-phosphate dehydrogenase [NAD(+)], found in Pyricularia oryzae (strain Y34) (Rice blast fungus).